A 266-amino-acid polypeptide reads, in one-letter code: 5'-nucleotidase SurE (266 aa).

Positions 8, 9, 39, and 93 each coordinate a divalent metal cation.

The protein belongs to the SurE nucleotidase family. A divalent metal cation serves as cofactor.

It localises to the cytoplasm. It catalyses the reaction a ribonucleoside 5'-phosphate + H2O = a ribonucleoside + phosphate. In terms of biological role, nucleotidase that shows phosphatase activity on nucleoside 5'-monophosphates. The sequence is that of 5'-nucleotidase SurE from Pyrobaculum arsenaticum (strain DSM 13514 / JCM 11321 / PZ6).